Here is a 692-residue protein sequence, read N- to C-terminus: Elongation factor G (692 aa).

A tr-type G domain is found at 8–283 (DHVRNIGIMA…AVVDYFPSPS (276 aa)). Residues 17-24 (AHIDAGKT), 81-85 (DTPGH), and 135-138 (NKMD) each bind GTP.

It belongs to the TRAFAC class translation factor GTPase superfamily. Classic translation factor GTPase family. EF-G/EF-2 subfamily.

It localises to the cytoplasm. In terms of biological role, catalyzes the GTP-dependent ribosomal translocation step during translation elongation. During this step, the ribosome changes from the pre-translocational (PRE) to the post-translocational (POST) state as the newly formed A-site-bound peptidyl-tRNA and P-site-bound deacylated tRNA move to the P and E sites, respectively. Catalyzes the coordinated movement of the two tRNA molecules, the mRNA and conformational changes in the ribosome. This is Elongation factor G from Magnetococcus marinus (strain ATCC BAA-1437 / JCM 17883 / MC-1).